Reading from the N-terminus, the 299-residue chain is Quinolinate synthase (299 aa).

Iminosuccinate-binding residues include H21 and S38. A [4Fe-4S] cluster-binding site is contributed by C83. Residues 109–111 (YVN) and S126 contribute to the iminosuccinate site. Residue C170 participates in [4Fe-4S] cluster binding. Residues 196–198 (HPE) and T213 each bind iminosuccinate. A [4Fe-4S] cluster-binding site is contributed by C256.

Belongs to the quinolinate synthase family. Type 2 subfamily. [4Fe-4S] cluster serves as cofactor.

The protein localises to the cytoplasm. The enzyme catalyses iminosuccinate + dihydroxyacetone phosphate = quinolinate + phosphate + 2 H2O + H(+). The protein operates within cofactor biosynthesis; NAD(+) biosynthesis; quinolinate from iminoaspartate: step 1/1. Functionally, catalyzes the condensation of iminoaspartate with dihydroxyacetone phosphate to form quinolinate. The protein is Quinolinate synthase of Pyrococcus abyssi (strain GE5 / Orsay).